Here is a 476-residue protein sequence, read N- to C-terminus: Bifunctional protein HldE (476 aa).

The interval 1–318 (MKVTLPDFRR…ENAIRGRAET (318 aa)) is ribokinase. 195–198 (NLSE) contacts ATP. D264 is an active-site residue. Positions 344–476 (MTNGIFDILH…IIQSIKNGLG (133 aa)) are cytidylyltransferase.

It in the N-terminal section; belongs to the carbohydrate kinase PfkB family. The protein in the C-terminal section; belongs to the cytidylyltransferase family. Homodimer.

The enzyme catalyses D-glycero-beta-D-manno-heptose 7-phosphate + ATP = D-glycero-beta-D-manno-heptose 1,7-bisphosphate + ADP + H(+). The catalysed reaction is D-glycero-beta-D-manno-heptose 1-phosphate + ATP + H(+) = ADP-D-glycero-beta-D-manno-heptose + diphosphate. Its pathway is nucleotide-sugar biosynthesis; ADP-L-glycero-beta-D-manno-heptose biosynthesis; ADP-L-glycero-beta-D-manno-heptose from D-glycero-beta-D-manno-heptose 7-phosphate: step 1/4. The protein operates within nucleotide-sugar biosynthesis; ADP-L-glycero-beta-D-manno-heptose biosynthesis; ADP-L-glycero-beta-D-manno-heptose from D-glycero-beta-D-manno-heptose 7-phosphate: step 3/4. In terms of biological role, catalyzes the phosphorylation of D-glycero-D-manno-heptose 7-phosphate at the C-1 position to selectively form D-glycero-beta-D-manno-heptose-1,7-bisphosphate. Its function is as follows. Catalyzes the ADP transfer from ATP to D-glycero-beta-D-manno-heptose 1-phosphate, yielding ADP-D-glycero-beta-D-manno-heptose. The chain is Bifunctional protein HldE from Yersinia enterocolitica serotype O:8 / biotype 1B (strain NCTC 13174 / 8081).